Consider the following 440-residue polypeptide: Phosphatidylglycerol--prolipoprotein diacylglyceryl transferase (440 aa).

The next 4 membrane-spanning stretches (helical) occupy residues 21 to 41 (VPIR…LLIG), 53 to 73 (GVIY…GRLY), 96 to 116 (IWDG…GAWI), and 122 to 142 (GIPL…AQAI). An a 1,2-diacyl-sn-glycero-3-phospho-(1'-sn-glycerol)-binding site is contributed by R144. A run of 2 helical transmembrane segments spans residues 189-209 (VALV…LIFV) and 256-276 (INSF…MAAP). The interval 280–440 (EDPESLRGNQ…ARLRDRLSGR (161 aa)) is disordered. Over residues 299–330 (EPATVAATTEAATEGVAAPADGAEAAGADATA) the composition is skewed to low complexity. A compositionally biased stretch (basic and acidic residues) spans 332–346 (RPEESAEPDVEKPES). Over residues 347–417 (EETEAEAAEE…PEQPVAEEPE (71 aa)) the composition is skewed to acidic residues. Positions 424 to 440 (ETKRRWGARLRDRLSGR) are enriched in basic and acidic residues.

The protein belongs to the Lgt family.

The protein localises to the cell membrane. It carries out the reaction L-cysteinyl-[prolipoprotein] + a 1,2-diacyl-sn-glycero-3-phospho-(1'-sn-glycerol) = an S-1,2-diacyl-sn-glyceryl-L-cysteinyl-[prolipoprotein] + sn-glycerol 1-phosphate + H(+). It functions in the pathway protein modification; lipoprotein biosynthesis (diacylglyceryl transfer). In terms of biological role, catalyzes the transfer of the diacylglyceryl group from phosphatidylglycerol to the sulfhydryl group of the N-terminal cysteine of a prolipoprotein, the first step in the formation of mature lipoproteins. This Mycobacterium avium (strain 104) protein is Phosphatidylglycerol--prolipoprotein diacylglyceryl transferase.